A 293-amino-acid chain; its full sequence is Phosphoribosylaminoimidazole-succinocarboxamide synthase (293 aa).

It belongs to the SAICAR synthetase family.

It catalyses the reaction 5-amino-1-(5-phospho-D-ribosyl)imidazole-4-carboxylate + L-aspartate + ATP = (2S)-2-[5-amino-1-(5-phospho-beta-D-ribosyl)imidazole-4-carboxamido]succinate + ADP + phosphate + 2 H(+). The protein operates within purine metabolism; IMP biosynthesis via de novo pathway; 5-amino-1-(5-phospho-D-ribosyl)imidazole-4-carboxamide from 5-amino-1-(5-phospho-D-ribosyl)imidazole-4-carboxylate: step 1/2. This chain is Phosphoribosylaminoimidazole-succinocarboxamide synthase, found in Bordetella parapertussis (strain 12822 / ATCC BAA-587 / NCTC 13253).